Reading from the N-terminus, the 331-residue chain is MGGDNAPACVVEGVIDALRESGNRFEILLIGQEEKVAPLLQQYDTGALKLRFVHAPEVITMEDVPATAVKAKQESSLVRGLKLCKAKDADAFVSAGNTGAMMAASLFVLGRIPGVLRPTIYAYFPRLGEGLTNLVDVGANVDCKPENLVQFAEMLTIYQRYAAKIEQPVVGLLNIGEEEGKGPDYLKQAWKMLQKAHEEQKINFIGNIEGHDILAGKATIVVCDGLVGNTILKFGESIPHFLGAIFKPALEKLVKEGKLDQNSAVLAGQTFKGIFEPFDVEKFGGVPFLGVDGISIVGHGRSSARAIKNMIYMAEHMIEQRVNERIAKMLA.

This sequence belongs to the PlsX family. Homodimer. Probably interacts with PlsY.

The protein resides in the cytoplasm. The enzyme catalyses a fatty acyl-[ACP] + phosphate = an acyl phosphate + holo-[ACP]. It participates in lipid metabolism; phospholipid metabolism. Functionally, catalyzes the reversible formation of acyl-phosphate (acyl-PO(4)) from acyl-[acyl-carrier-protein] (acyl-ACP). This enzyme utilizes acyl-ACP as fatty acyl donor, but not acyl-CoA. The sequence is that of Phosphate acyltransferase from Chlorobaculum tepidum (strain ATCC 49652 / DSM 12025 / NBRC 103806 / TLS) (Chlorobium tepidum).